A 244-amino-acid chain; its full sequence is L-xylulose reductase (244 aa).

The residue at position 1 (methionine 1) is an N-acetylmethionine. 11-39 provides a ligand contact to NADP(+); it reads LVTGAGKGIGRSTVLALQAAGAHVVAVSR. Arginine 21 is subject to Omega-N-methylarginine. Serine 46 bears the Phosphoserine mark. Serine 136 provides a ligand contact to substrate. The active-site Proton acceptor is the tyrosine 149. Lysine 153 is a catalytic residue.

The protein belongs to the short-chain dehydrogenases/reductases (SDR) family. As to quaternary structure, homotetramer. As to expression, highly expressed in kidney and liver. Expressed in epididymis. Weakly expressed in brain, heart, lung, spleen and testis.

The protein resides in the membrane. It localises to the cytoplasmic vesicle. Its subcellular location is the secretory vesicle. It is found in the acrosome. It catalyses the reaction xylitol + NADP(+) = L-xylulose + NADPH + H(+). In terms of biological role, catalyzes the NADPH-dependent reduction of several pentoses, tetroses, trioses, alpha-dicarbonyl compounds and L-xylulose. Participates in the uronate cycle of glucose metabolism. May play a role in the water absorption and cellular osmoregulation in the proximal renal tubules by producing xylitol, an osmolyte, thereby preventing osmolytic stress from occurring in the renal tubules. The protein is L-xylulose reductase (DCXR) of Mesocricetus auratus (Golden hamster).